Reading from the N-terminus, the 486-residue chain is MVIAGDGKAGAKKSRWSAGVTPYAEMGYYNADYVPKDTDILAAFRFVPQEGVEPIEAGAAVAGESSTATWTVVWTDRLTAYEHYQGKCFRVEPVPGTNQYIAFIAYDLDLFEEGSIANMSSSIIGNVFGFKALKSLRLEDLRIPPHYVKTFQGPAHGIMMEREYLNKYGRPLLGATVKPKLGLSAKNYGRVVYEALRGGLDFTKDDENINSQPFMRWRDRWLFCMEAVNKAMAETGEIKGHYLNVTAATMEEMYERAEFAKELGSVIIMVDLTAGFTAIQSMAKWCRKNGVLLHLHRAGHSTYTRQKIHGVNFRVIAKWMRLAGVDHIHAGTVVGKLEGDLHSVQGYYKTLRTQYTEADPLLGLYFEQDWASMPGVMPVASGGIHAGQMHLLLSYLGEDTILQFGGGTIGHPDGIAAGATANRVAVEVMVQARNEGKDILREGPEILEKACRWSPALAKAIETWKDISFEFESTDVPDAVAMPTIA.

Residues N126 and T176 each contribute to the substrate site. Catalysis depends on K178, which acts as the Proton acceptor. K180 serves as a coordination point for substrate. Mg(2+)-binding residues include K204, D206, and E207. At K204 the chain carries N6-carboxylysine. H296 (proton acceptor) is an active-site residue. The substrate site is built by R297, H329, and S381.

The protein belongs to the RuBisCO large chain family. Type I subfamily. As to quaternary structure, heterohexadecamer of 8 large chains and 8 small chains. It depends on Mg(2+) as a cofactor.

It carries out the reaction 2 (2R)-3-phosphoglycerate + 2 H(+) = D-ribulose 1,5-bisphosphate + CO2 + H2O. It catalyses the reaction D-ribulose 1,5-bisphosphate + O2 = 2-phosphoglycolate + (2R)-3-phosphoglycerate + 2 H(+). Its function is as follows. RuBisCO catalyzes two reactions: the carboxylation of D-ribulose 1,5-bisphosphate, the primary event in carbon dioxide fixation, as well as the oxidative fragmentation of the pentose substrate. Both reactions occur simultaneously and in competition at the same active site. This is Ribulose bisphosphate carboxylase large chain from Methylacidiphilum infernorum (isolate V4) (Methylokorus infernorum (strain V4)).